The chain runs to 371 residues: Ferrochelatase (371 aa).

Fe cation contacts are provided by His218 and Glu299.

The protein belongs to the ferrochelatase family.

The protein localises to the cytoplasm. The enzyme catalyses heme b + 2 H(+) = protoporphyrin IX + Fe(2+). It participates in porphyrin-containing compound metabolism; protoheme biosynthesis; protoheme from protoporphyrin-IX: step 1/1. In terms of biological role, catalyzes the ferrous insertion into protoporphyrin IX. In Cupriavidus pinatubonensis (strain JMP 134 / LMG 1197) (Cupriavidus necator (strain JMP 134)), this protein is Ferrochelatase.